A 77-amino-acid chain; its full sequence is NADH-ubiquinone oxidoreductase chain 4L (77 aa).

Transmembrane regions (helical) follow at residues 18–38 (LMFI…LFSG) and 44–64 (MFFY…VVMV).

The protein belongs to the complex I subunit 4L family.

The protein localises to the mitochondrion membrane. It catalyses the reaction a ubiquinone + NADH + 5 H(+)(in) = a ubiquinol + NAD(+) + 4 H(+)(out). Its function is as follows. Core subunit of the mitochondrial membrane respiratory chain NADH dehydrogenase (Complex I) that is believed to belong to the minimal assembly required for catalysis. Complex I functions in the transfer of electrons from NADH to the respiratory chain. The immediate electron acceptor for the enzyme is believed to be ubiquinone. The protein is NADH-ubiquinone oxidoreductase chain 4L (ND4L) of Ascaris suum (Pig roundworm).